The chain runs to 235 residues: BPI fold-containing family A member 2 (235 aa).

An N-terminal signal peptide occupies residues 1-20; the sequence is MFQLGSLVVLCGLLIGTSES. Cysteines 161 and 204 form a disulfide.

Belongs to the BPI/LBP/Plunc superfamily. Plunc family. Expressed in parotid, submandibular and sublingual glands.

The protein resides in the secreted. Functionally, has strong antibacterial activity against P.aeruginosa. The sequence is that of BPI fold-containing family A member 2 (Bpifa2) from Rattus norvegicus (Rat).